The chain runs to 430 residues: UDP-N-acetylglucosamine 1-carboxyvinyltransferase (430 aa).

Phosphoenolpyruvate is bound at residue 22–23 (KN). R102 lines the UDP-N-acetyl-alpha-D-glucosamine pocket. C126 (proton donor) is an active-site residue. C126 carries the 2-(S-cysteinyl)pyruvic acid O-phosphothioketal modification. Residues 131-135 (RPVDL), 172-175 (KVSV), D317, and I339 contribute to the UDP-N-acetyl-alpha-D-glucosamine site.

The protein belongs to the EPSP synthase family. MurA subfamily.

Its subcellular location is the cytoplasm. It catalyses the reaction phosphoenolpyruvate + UDP-N-acetyl-alpha-D-glucosamine = UDP-N-acetyl-3-O-(1-carboxyvinyl)-alpha-D-glucosamine + phosphate. The protein operates within cell wall biogenesis; peptidoglycan biosynthesis. Functionally, cell wall formation. Adds enolpyruvyl to UDP-N-acetylglucosamine. The protein is UDP-N-acetylglucosamine 1-carboxyvinyltransferase of Rhizobium meliloti (strain 1021) (Ensifer meliloti).